We begin with the raw amino-acid sequence, 116 residues long: HTH-type transcriptional regulator SarV (116 aa).

Positions 51 to 74 form a DNA-binding region, H-T-H motif; the sequence is RDTLHFEMLWDTSKIDVIIRKIYK.

It belongs to the SarA family.

Its subcellular location is the cytoplasm. Functionally, part of the pathway by which MgrA and SarA control autolysis. The polypeptide is HTH-type transcriptional regulator SarV (sarV) (Staphylococcus aureus (strain Mu50 / ATCC 700699)).